Consider the following 92-residue polypeptide: Cell division protein FtsB (92 aa).

The Cytoplasmic segment spans residues 1-3 (MRL). The chain crosses the membrane as a helical span at residues 4–21 (LILILLSVLVLFQYNFWF). Topologically, residues 22-92 (GSNGFLDYRQ…VFYHIVKESK (71 aa)) are periplasmic. Residues 28-63 (DYRQNAEKIKENQAENEKLSQRNQRINAEIQGLTKG) are a coiled coil.

This sequence belongs to the FtsB family. As to quaternary structure, part of a complex composed of FtsB, FtsL and FtsQ.

It localises to the cell inner membrane. In terms of biological role, essential cell division protein. May link together the upstream cell division proteins, which are predominantly cytoplasmic, with the downstream cell division proteins, which are predominantly periplasmic. The sequence is that of Cell division protein FtsB from Haemophilus influenzae (strain 86-028NP).